We begin with the raw amino-acid sequence, 145 residues long: Nickel-responsive regulator (145 aa).

His77, His88, His90, and Cys96 together coordinate Ni(2+).

This sequence belongs to the transcriptional regulatory CopG/NikR family. As to quaternary structure, homotetramer. It depends on Ni(2+) as a cofactor.

Its function is as follows. Transcriptional repressor of the nikABCDE operon. Is active in the presence of excessive concentrations of intracellular nickel. The sequence is that of Nickel-responsive regulator from Edwardsiella ictaluri (strain 93-146).